The primary structure comprises 180 residues: Small ribosomal subunit protein uS4 (180 aa).

Residues 103-174 form the S4 RNA-binding domain; the sequence is RRLQTIVYKK…HPERMMIEKA (72 aa).

Belongs to the universal ribosomal protein uS4 family. In terms of assembly, part of the 30S ribosomal subunit. Contacts protein S5. The interaction surface between S4 and S5 is involved in control of translational fidelity.

Functionally, one of the primary rRNA binding proteins, it binds directly to 16S rRNA where it nucleates assembly of the body of the 30S subunit. With S5 and S12 plays an important role in translational accuracy. The protein is Small ribosomal subunit protein uS4 of Pyrococcus horikoshii (strain ATCC 700860 / DSM 12428 / JCM 9974 / NBRC 100139 / OT-3).